The sequence spans 94 residues: Co-chaperonin GroES (94 aa).

The protein belongs to the GroES chaperonin family. Heptamer of 7 subunits arranged in a ring. Interacts with the chaperonin GroEL.

It localises to the cytoplasm. Together with the chaperonin GroEL, plays an essential role in assisting protein folding. The GroEL-GroES system forms a nano-cage that allows encapsulation of the non-native substrate proteins and provides a physical environment optimized to promote and accelerate protein folding. GroES binds to the apical surface of the GroEL ring, thereby capping the opening of the GroEL channel. The protein is Co-chaperonin GroES of Listeria welshimeri serovar 6b (strain ATCC 35897 / DSM 20650 / CCUG 15529 / CIP 8149 / NCTC 11857 / SLCC 5334 / V8).